A 411-amino-acid polypeptide reads, in one-letter code: Tyrosine--tRNA ligase (411 aa).

Residue Tyr-34 coordinates L-tyrosine. Positions Cys-39 to Ser-48 match the 'HIGH' region motif. L-tyrosine contacts are provided by Tyr-171 and Gln-175. Residues Lys-231–Thr-235 carry the 'KMSKS' region motif. Lys-234 provides a ligand contact to ATP. The S4 RNA-binding domain maps to Ile-345–Val-411.

Belongs to the class-I aminoacyl-tRNA synthetase family. TyrS type 1 subfamily. Homodimer.

Its subcellular location is the cytoplasm. The catalysed reaction is tRNA(Tyr) + L-tyrosine + ATP = L-tyrosyl-tRNA(Tyr) + AMP + diphosphate + H(+). Catalyzes the attachment of tyrosine to tRNA(Tyr) in a two-step reaction: tyrosine is first activated by ATP to form Tyr-AMP and then transferred to the acceptor end of tRNA(Tyr). The polypeptide is Tyrosine--tRNA ligase (Rickettsia rickettsii (strain Sheila Smith)).